The sequence spans 324 residues: Polyketide biosynthesis acyltransferase homolog BaeD (324 aa).

Ser-99 is an active-site residue.

It is found in the cytoplasm. It participates in antibiotic biosynthesis; bacillaene biosynthesis. Functionally, probably involved in some intermediate steps for the synthesis of the antibiotic polyketide bacillaene which is involved in secondary metabolism. The chain is Polyketide biosynthesis acyltransferase homolog BaeD (baeD) from Bacillus velezensis (strain DSM 23117 / BGSC 10A6 / LMG 26770 / FZB42) (Bacillus amyloliquefaciens subsp. plantarum).